Here is a 294-residue protein sequence, read N- to C-terminus: Nucleotide-binding protein DICTH_1001 (294 aa).

10-17 (GLSGAGKS) lines the ATP pocket. 61–64 (DIRT) is a binding site for GTP.

It belongs to the RapZ-like family.

Its function is as follows. Displays ATPase and GTPase activities. The chain is Nucleotide-binding protein DICTH_1001 from Dictyoglomus thermophilum (strain ATCC 35947 / DSM 3960 / H-6-12).